The following is a 311-amino-acid chain: Ribosomal RNA small subunit methyltransferase H (311 aa).

S-adenosyl-L-methionine-binding positions include 32-34, Asp-52, Phe-79, Asp-100, and Gln-107; that span reads AGH. A disordered region spans residues 287 to 311; the sequence is TASQEELEENNRARSAKLRIAEKRK. Positions 300–311 are enriched in basic residues; it reads RSAKLRIAEKRK.

This sequence belongs to the methyltransferase superfamily. RsmH family.

Its subcellular location is the cytoplasm. The catalysed reaction is cytidine(1402) in 16S rRNA + S-adenosyl-L-methionine = N(4)-methylcytidine(1402) in 16S rRNA + S-adenosyl-L-homocysteine + H(+). Functionally, specifically methylates the N4 position of cytidine in position 1402 (C1402) of 16S rRNA. This chain is Ribosomal RNA small subunit methyltransferase H, found in Bacillus subtilis (strain 168).